Reading from the N-terminus, the 236-residue chain is MKTIVICSGGLDSVSLAHKIAAEHELLALVSFDYGQRHKKELDFAADCAKRLGVPHHLIDIGTIGAHLTGSALTDDIDVPDGHYAEETMRSTVVPNRNAIMLTIAFGLAAAQQADAVAIAVHGGDHFIYPDCRPGFIGSFNAMQAHALEGYADVTLFAPYVTVSKAAIVTDAVKYGTPFGETWSCYKGGLRHCGRCGTCVERREAFHLAGVTDPTEYEDPDFWVAATQAYAAQEVH.

7-17 (CSGGLDSVSLA) contacts ATP. 4 residues coordinate Zn(2+): Cys185, Cys193, Cys196, and Cys199.

It belongs to the QueC family. The cofactor is Zn(2+).

It carries out the reaction 7-carboxy-7-deazaguanine + NH4(+) + ATP = 7-cyano-7-deazaguanine + ADP + phosphate + H2O + H(+). The protein operates within purine metabolism; 7-cyano-7-deazaguanine biosynthesis. Functionally, catalyzes the ATP-dependent conversion of 7-carboxy-7-deazaguanine (CDG) to 7-cyano-7-deazaguanine (preQ(0)). The chain is 7-cyano-7-deazaguanine synthase from Agrobacterium fabrum (strain C58 / ATCC 33970) (Agrobacterium tumefaciens (strain C58)).